Here is a 301-residue protein sequence, read N- to C-terminus: Putative MgpC-like protein MPN_093 (301 aa).

Belongs to the MgpC family.

In Mycoplasma pneumoniae (strain ATCC 29342 / M129 / Subtype 1) (Mycoplasmoides pneumoniae), this protein is Putative MgpC-like protein MPN_093.